A 170-amino-acid polypeptide reads, in one-letter code: Photosystem II extrinsic protein V (170 aa).

Positions 1-33 are cleaved as a signal peptide; sequence MASLFASLGRSLIKLLIVLPVIIGLSISSPAMA. Positions 70, 73, 74, and 125 each coordinate heme c.

It belongs to the cytochrome c family. PsbV subfamily. In terms of assembly, PSII is composed of 1 copy each of membrane proteins PsbA, PsbB, PsbC, PsbD, PsbE, PsbF, PsbH, PsbI, PsbJ, PsbK, PsbL, PsbM, PsbT, PsbX, PsbY, Psb30/Ycf12, peripheral proteins PsbO, CyanoQ (PsbQ), PsbU, PsbV and a large number of cofactors. It forms dimeric complexes. It depends on heme c as a cofactor.

The protein resides in the cellular thylakoid membrane. One of the extrinsic, lumenal subunits of photosystem II (PSII). PSII is a light-driven water plastoquinone oxidoreductase, using light energy to abstract electrons from H(2)O, generating a proton gradient subsequently used for ATP formation. The extrinsic proteins stabilize the structure of photosystem II oxygen-evolving complex (OEC), the ion environment of oxygen evolution and protect the OEC against heat-induced inactivation. Low-potential cytochrome c that plays a role in the OEC of PSII. The chain is Photosystem II extrinsic protein V from Prochlorococcus marinus (strain MIT 9313).